Consider the following 199-residue polypeptide: Probable NADH dehydrogenase [ubiquinone] iron-sulfur protein 7, mitochondrial (199 aa).

Residues Cys74, Cys75, Cys139, and Cys169 each contribute to the [4Fe-4S] cluster site.

Belongs to the complex I 20 kDa subunit family. In terms of assembly, complex I is composed of 45 different subunits This is a component of the iron-sulfur (IP) fragment of the enzyme. Requires [4Fe-4S] cluster as cofactor.

It is found in the mitochondrion. It catalyses the reaction a ubiquinone + NADH + 5 H(+)(in) = a ubiquinol + NAD(+) + 4 H(+)(out). Functionally, core subunit of the mitochondrial membrane respiratory chain NADH dehydrogenase (Complex I) that is believed to belong to the minimal assembly required for catalysis. Complex I functions in the transfer of electrons from NADH to the respiratory chain. The immediate electron acceptor for the enzyme is believed to be ubiquinone. This is Probable NADH dehydrogenase [ubiquinone] iron-sulfur protein 7, mitochondrial (nduf-7) from Caenorhabditis elegans.